A 177-amino-acid polypeptide reads, in one-letter code: ATP-dependent protease subunit HslV (177 aa).

Residue threonine 7 is part of the active site. Residues glycine 162, cysteine 165, and threonine 168 each contribute to the Na(+) site.

It belongs to the peptidase T1B family. HslV subfamily. As to quaternary structure, a double ring-shaped homohexamer of HslV is capped on each side by a ring-shaped HslU homohexamer. The assembly of the HslU/HslV complex is dependent on binding of ATP.

Its subcellular location is the cytoplasm. It catalyses the reaction ATP-dependent cleavage of peptide bonds with broad specificity.. With respect to regulation, allosterically activated by HslU binding. Protease subunit of a proteasome-like degradation complex believed to be a general protein degrading machinery. This Persephonella marina (strain DSM 14350 / EX-H1) protein is ATP-dependent protease subunit HslV.